We begin with the raw amino-acid sequence, 93 residues long: U8-theraphotoxin-Hs1b (93 aa).

The N-terminal stretch at 1-18 (MKAILLLAIFSVLTVAIC) is a signal peptide. Disulfide bonds link Cys-40–Cys-54, Cys-40–Cys-81, Cys-53–Cys-66, and Cys-84–Cys-91.

Belongs to the neurotoxin 27 (Jztx-72) family. ICK-72 subfamily. Expressed by the venom gland.

The protein localises to the secreted. Probable neurotoxin with ion channel impairing activity. The polypeptide is U8-theraphotoxin-Hs1b (Cyriopagopus schmidti (Chinese bird spider)).